The primary structure comprises 188 residues: Elongation factor P (188 aa).

N6-(3,6-diaminohexanoyl)-5-hydroxylysine is present on Lys34.

Belongs to the elongation factor P family. Post-translationally, may be beta-lysylated on the epsilon-amino group of Lys-34 by the combined action of EpmA and EpmB, and then hydroxylated on the C5 position of the same residue by EpmC (if this protein is present). Lysylation is critical for the stimulatory effect of EF-P on peptide-bond formation. The lysylation moiety may extend toward the peptidyltransferase center and stabilize the terminal 3-CCA end of the tRNA. Hydroxylation of the C5 position on Lys-34 may allow additional potential stabilizing hydrogen-bond interactions with the P-tRNA.

It localises to the cytoplasm. It functions in the pathway protein biosynthesis; polypeptide chain elongation. In terms of biological role, involved in peptide bond synthesis. Alleviates ribosome stalling that occurs when 3 or more consecutive Pro residues or the sequence PPG is present in a protein, possibly by augmenting the peptidyl transferase activity of the ribosome. Modification of Lys-34 is required for alleviation. The polypeptide is Elongation factor P (Vibrio atlanticus (strain LGP32) (Vibrio splendidus (strain Mel32))).